Reading from the N-terminus, the 337-residue chain is Thymidylate synthase (337 aa).

DUMP is bound by residues R74 and 199 to 200 (RR). The active-site Nucleophile is the C219. Residues 239 to 242 (RSGD), N250, and 280 to 282 (HIY) each bind dUMP. D242 is a binding site for (6R)-5,10-methylene-5,6,7,8-tetrahydrofolate. A336 contacts (6R)-5,10-methylene-5,6,7,8-tetrahydrofolate.

Belongs to the thymidylate synthase family. In terms of assembly, homodimer.

The enzyme catalyses dUMP + (6R)-5,10-methylene-5,6,7,8-tetrahydrofolate = 7,8-dihydrofolate + dTMP. The protein operates within pyrimidine metabolism; dTTP biosynthesis. The sequence is that of Thymidylate synthase (70) from Homo sapiens (Human).